A 502-amino-acid polypeptide reads, in one-letter code: Probable cytosol aminopeptidase (502 aa).

Positions 269 and 274 each coordinate Mn(2+). Residue lysine 281 is part of the active site. Mn(2+) is bound by residues aspartate 292, aspartate 351, and glutamate 353. Arginine 355 is a catalytic residue.

It belongs to the peptidase M17 family. Requires Mn(2+) as cofactor.

It is found in the cytoplasm. It carries out the reaction Release of an N-terminal amino acid, Xaa-|-Yaa-, in which Xaa is preferably Leu, but may be other amino acids including Pro although not Arg or Lys, and Yaa may be Pro. Amino acid amides and methyl esters are also readily hydrolyzed, but rates on arylamides are exceedingly low.. The catalysed reaction is Release of an N-terminal amino acid, preferentially leucine, but not glutamic or aspartic acids.. Its function is as follows. Presumably involved in the processing and regular turnover of intracellular proteins. Catalyzes the removal of unsubstituted N-terminal amino acids from various peptides. In Shewanella frigidimarina (strain NCIMB 400), this protein is Probable cytosol aminopeptidase.